The following is a 1587-amino-acid chain: Sister chromatid cohesion protein mis4 (1587 aa).

Residues 140-172 form a disordered region; sequence PKEKPDASSINTNRSSSDNGFLTPSSSPRSPSC. The span at 147–162 shows a compositional bias: polar residues; that stretch reads SSINTNRSSSDNGFLT. Low complexity predominate over residues 163 to 172; it reads PSSSPRSPSC. Serine 183 bears the Phosphoserine mark. HEAT repeat units follow at residues 775 to 812, 814 to 851, 853 to 888, 890 to 927, 1101 to 1140, and 1183 to 1220; these read LNLK…IPSI, RTHP…AYRE, IPQI…ATED, NIRV…SPAS, ATLM…ARHS, and DAYV…RETS.

It belongs to the SCC2/Nipped-B family. As to quaternary structure, interacts with ssl3.

Its subcellular location is the nucleus. It localises to the chromosome. Plays a structural role in chromatin. Chromatid cohesion molecule required for equal sister chromatid separation in anaphase. May form a stable link between chromatids in S phase that is split rather than removed in anaphase. Also required for spindle-kinetochore interaction in early mitosis and inhibit sister chromatid separation until the cleavage of Rad21 in anaphase. This chain is Sister chromatid cohesion protein mis4 (mis4), found in Schizosaccharomyces pombe (strain 972 / ATCC 24843) (Fission yeast).